We begin with the raw amino-acid sequence, 790 residues long: Protein SEY1 (790 aa).

Residues 1 to 692 are Cytoplasmic-facing; the sequence is MELSEGELSH…KRSIVQHITQ (692 aa). The region spanning 55-284 is the GB1/RHD3-type G domain; that stretch reads GNNYHIISVF…VSNELFKPEY (230 aa). 65–72 provides a ligand contact to GTP; that stretch reads GSQSTGKS. Residues 693–713 form a helical membrane-spanning segment; that stretch reads IPYYIYLIILVLGWNEFMAII. Residues 714–716 lie on the Lumenal side of the membrane; that stretch reads RNP. Residues 717–737 traverse the membrane as a helical segment; it reads LFFSLSIVLGATVYVLYYLGL. The Cytoplasmic portion of the chain corresponds to 738–790; that stretch reads LRPALVVAQRTMDEVIVMAKTKLREVLIDDHEVTGRQLNKMAGSKENIELDDM.

This sequence belongs to the TRAFAC class dynamin-like GTPase superfamily. GB1/RHD3 GTPase family. RHD3 subfamily.

Its subcellular location is the endoplasmic reticulum membrane. In terms of biological role, cooperates with the reticulon proteins and tubule-shaping DP1 family proteins to generate and maintain the structure of the tubular endoplasmic reticulum network. Has GTPase activity, which is required for its function in ER organization. Required for virulence and resistance to cycloheximide. This chain is Protein SEY1, found in Candida albicans (strain SC5314 / ATCC MYA-2876) (Yeast).